A 576-amino-acid chain; its full sequence is MAGUK p55 subfamily member 7 (576 aa).

2 consecutive L27 domains span residues 10–65 (SDTG…KQSP) and 67–122 (PILH…YDPV). Positions 139–220 (IIRLVKNREP…AITFKIIPGS (82 aa)) constitute a PDZ domain. In terms of domain architecture, SH3 spans 228-298 (EGKMFIKALF…PSKHFQERRL (71 aa)). Residues 289 to 383 (PSKHFQERRL…VGPVGVGLNE (95 aa)) are phospho-regulated basic and hydrophobic (PRBH) motif. In terms of domain architecture, Guanylate kinase-like spans 368–560 (YRLVVLVGPV…AFNELKTTFD (193 aa)). Serine 409 is subject to Phosphoserine.

This sequence belongs to the MAGUK family. In terms of assembly, heterodimer; able to heterodimerize via its C-terminal L27 domain with LIN7A, LIN7B and LIN7C. Forms a tripartite complex composed of DLG1, MPP7 and LIN7 (LIN7A or LIN7C). Interacts with DLG1 via its N-terminal L27 domain. Interacts with PALS1 and PATJ. Phosphorylated by aPKC which promotes dissociation from the cell cortex.

The protein localises to the membrane. It localises to the lateral cell membrane. It is found in the cell junction. The protein resides in the tight junction. Its subcellular location is the adherens junction. The protein localises to the cytoplasm. It localises to the cell cortex. Functionally, acts as an important adapter that promotes epithelial cell polarity and tight junction formation via its interaction with DLG1. Involved in the assembly of protein complexes at sites of cell-cell contact. This chain is MAGUK p55 subfamily member 7 (MPP7), found in Homo sapiens (Human).